Consider the following 161-residue polypeptide: Capsid protein (161 aa).

The protein belongs to the virgaviridae capsid protein family.

Its subcellular location is the virion. In terms of biological role, capsid protein self-assembles to form rod-shaped virions about 18 nm in diameter with a central canal enclosing the viral genomic RNA. The polypeptide is Capsid protein (CP) (Tobamovirus Ob).